The sequence spans 259 residues: Flagellar L-ring protein 1 (259 aa).

The first 15 residues, 1-15, serve as a signal peptide directing secretion; the sequence is MKRICLLALITTMSG. C16 carries N-palmitoyl cysteine lipidation. Residue C16 is the site of S-diacylglycerol cysteine attachment. The interval 38-63 is disordered; it reads EGDKSKDESSGIVDTLRGRNDPVAGD.

This sequence belongs to the FlgH family. The basal body constitutes a major portion of the flagellar organelle and consists of four rings (L,P,S, and M) mounted on a central rod.

The protein resides in the cell outer membrane. It is found in the bacterial flagellum basal body. Its function is as follows. Assembles around the rod to form the L-ring and probably protects the motor/basal body from shearing forces during rotation. This chain is Flagellar L-ring protein 1 (flgH1), found in Vibrio parahaemolyticus serotype O3:K6 (strain RIMD 2210633).